A 123-amino-acid chain; its full sequence is MTDLAKIVEDLSNLTVLEAAELSKMLEEKWGVSAAAPVAVAAAGAAPAAAAEEQTEFDVILAAAGDKKIEVIKEVRAITGLGLKEAKDLVEGAPKTVKEAASKDEAAKIKAQLEKAGAKVELK.

The protein belongs to the bacterial ribosomal protein bL12 family. In terms of assembly, homodimer. Part of the ribosomal stalk of the 50S ribosomal subunit. Forms a multimeric L10(L12)X complex, where L10 forms an elongated spine to which 2 to 4 L12 dimers bind in a sequential fashion. Binds GTP-bound translation factors.

Functionally, forms part of the ribosomal stalk which helps the ribosome interact with GTP-bound translation factors. Is thus essential for accurate translation. In Parvibaculum lavamentivorans (strain DS-1 / DSM 13023 / NCIMB 13966), this protein is Large ribosomal subunit protein bL12.